A 411-amino-acid chain; its full sequence is Bifunctional protein GlmU (411 aa).

The tract at residues 1–204 is pyrophosphorylase; that stretch reads MDAIILCAGK…NGKLHGVELK (204 aa). Residues 6-9, Gln-74, and Gly-79 contribute to the UTP site; that span reads LCAG. The N-acetyl-alpha-D-glucosamine 1-phosphate site is built by Thr-80, Gly-130, Asn-142, and Asn-158. Residues 205–224 form a linker region; sequence GYWNDIGHPWDVLSANNHFL. The N-acetyltransferase stretch occupies residues 225–411; it reads NKIISKVSGK…DELVITKKRN (187 aa). His-308 serves as the catalytic Proton acceptor. 2 residues coordinate acetyl-CoA: Ala-384 and Lys-401.

The protein in the N-terminal section; belongs to the N-acetylglucosamine-1-phosphate uridyltransferase family. This sequence in the C-terminal section; belongs to the transferase hexapeptide repeat family.

It catalyses the reaction N-acetyl-alpha-D-glucosamine 1-phosphate + UTP + H(+) = UDP-N-acetyl-alpha-D-glucosamine + diphosphate. The enzyme catalyses alpha-D-glucosamine 1-phosphate + acetyl-CoA = N-acetyl-alpha-D-glucosamine 1-phosphate + CoA + H(+). It functions in the pathway nucleotide-sugar biosynthesis; UDP-N-acetyl-alpha-D-glucosamine biosynthesis; N-acetyl-alpha-D-glucosamine 1-phosphate from alpha-D-glucosamine 6-phosphate (route II): step 2/2. It participates in nucleotide-sugar biosynthesis; UDP-N-acetyl-alpha-D-glucosamine biosynthesis; UDP-N-acetyl-alpha-D-glucosamine from N-acetyl-alpha-D-glucosamine 1-phosphate: step 1/1. Catalyzes the last two sequential reactions in the de novo biosynthetic pathway for UDP-N-acetyl-glucosamine (UDP-GlcNAc). Responsible for the acetylation of GlcN-1-P to GlcNAc-1-P, and for the uridyl transfer from UTP to GlcNAc-1-P, to produce UDP-GlcNAc and pyrophosphate. This is Bifunctional protein GlmU from Methanococcus maripaludis (strain DSM 14266 / JCM 13030 / NBRC 101832 / S2 / LL).